Here is a 196-residue protein sequence, read N- to C-terminus: C-type lectin domain family 3 member A (196 aa).

The signal sequence occupies residues 1 to 22 (MAKNGLVLCILVVSLLLDQTDG). 3 disulfides stabilise this stretch: cysteine 68/cysteine 78, cysteine 95/cysteine 191, and cysteine 167/cysteine 183. The 119-residue stretch at 74 to 192 (VHKKCYLASE…CRSSKRYICE (119 aa)) folds into the C-type lectin domain.

The protein localises to the secreted. Promotes cell adhesion to laminin and fibronectin. This chain is C-type lectin domain family 3 member A (Clec3a), found in Mus musculus (Mouse).